Reading from the N-terminus, the 160-residue chain is Phosphopantetheine adenylyltransferase (160 aa).

Serine 10 contacts substrate. ATP contacts are provided by residues serine 10–phenylalanine 11 and histidine 18. Residues lysine 42, leucine 74, and arginine 88 each contribute to the substrate site. ATP-binding positions include glycine 89–arginine 91, glutamate 99, and tyrosine 124–serine 130.

This sequence belongs to the bacterial CoaD family. Homohexamer. Requires Mg(2+) as cofactor.

It localises to the cytoplasm. It catalyses the reaction (R)-4'-phosphopantetheine + ATP + H(+) = 3'-dephospho-CoA + diphosphate. The protein operates within cofactor biosynthesis; coenzyme A biosynthesis; CoA from (R)-pantothenate: step 4/5. In terms of biological role, reversibly transfers an adenylyl group from ATP to 4'-phosphopantetheine, yielding dephospho-CoA (dPCoA) and pyrophosphate. The sequence is that of Phosphopantetheine adenylyltransferase from Bacillus velezensis (strain DSM 23117 / BGSC 10A6 / LMG 26770 / FZB42) (Bacillus amyloliquefaciens subsp. plantarum).